The sequence spans 235 residues: C-&gt;U-editing enzyme APOBEC-1 (235 aa).

The 122-residue stretch at 10 to 131 folds into the CMP/dCMP-type deaminase domain; that stretch reads GDATLRRRIK…MDQQHRQGLK (122 aa). Zn(2+) is bound at residue H60. E62 acts as the Proton donor in catalysis. Zn(2+) is bound by residues C92 and C95.

This sequence belongs to the cytidine and deoxycytidylate deaminase family. Homodimer. Interacts with A1CF; form an mRNA editing complex. Interacts with RBM47; form an mRNA editing complex. Found in a complex with CELF2/CUGBP2 and A1CF. Interacts with HNRPAB. Interacts with SYNCRIP. Zn(2+) is required as a cofactor.

The protein localises to the cytoplasm. It is found in the nucleus. It catalyses the reaction a cytidine in mRNA + H2O + H(+) = a uridine in mRNA + NH4(+). It carries out the reaction cytidine(6666) in apoB mRNA + H2O + H(+) = uridine(6666) in apoB mRNA + NH4(+). Its function is as follows. Cytidine deaminase catalyzing the cytidine to uridine postranscriptional editing of a variety of mRNAs. Form complexes with cofactors that confer differential editing activity and selectivity. Responsible for the postranscriptional editing of a CAA codon for Gln to a UAA codon for stop in the apolipoprotein B mRNA. Also involved in CGA (Arg) to UGA (Stop) editing in the NF1 mRNA. May also play a role in the epigenetic regulation of gene expression by participating in DNA demethylation. The polypeptide is C-&gt;U-editing enzyme APOBEC-1 (Monodelphis domestica (Gray short-tailed opossum)).